The following is a 362-amino-acid chain: Protein-glutamate methylesterase/protein-glutamine glutaminase (362 aa).

In terms of domain architecture, Response regulatory spans arginine 10 to glutamate 127. Residue aspartate 61 is modified to 4-aspartylphosphate. In terms of domain architecture, CheB-type methylesterase spans arginine 173 to glycine 362. Catalysis depends on residues serine 184, histidine 211, and aspartate 304.

This sequence belongs to the CheB family. In terms of processing, phosphorylated by CheA. Phosphorylation of the N-terminal regulatory domain activates the methylesterase activity.

It is found in the cytoplasm. It catalyses the reaction [protein]-L-glutamate 5-O-methyl ester + H2O = L-glutamyl-[protein] + methanol + H(+). The catalysed reaction is L-glutaminyl-[protein] + H2O = L-glutamyl-[protein] + NH4(+). Functionally, involved in chemotaxis. Part of a chemotaxis signal transduction system that modulates chemotaxis in response to various stimuli. Catalyzes the demethylation of specific methylglutamate residues introduced into the chemoreceptors (methyl-accepting chemotaxis proteins or MCP) by CheR. Also mediates the irreversible deamidation of specific glutamine residues to glutamic acid. This Symbiobacterium thermophilum (strain DSM 24528 / JCM 14929 / IAM 14863 / T) protein is Protein-glutamate methylesterase/protein-glutamine glutaminase.